A 513-amino-acid polypeptide reads, in one-letter code: uncharacterized protein (513 aa).

Residues 11 to 219 (HLEVERKFDV…SKLARVLGAT (209 aa)) enclose the CYTH domain. Residues 228–506 (PQPPADPVHR…LEAALRKLDK (279 aa)) form the CHAD domain.

This is an uncharacterized protein from Mycobacterium tuberculosis (strain ATCC 25618 / H37Rv).